A 428-amino-acid polypeptide reads, in one-letter code: Neuromedin-U receptor 1 (428 aa).

Residues 1–59 (MTPPCLNCSIFPGALSPNASRSPLVCNISEFKWPYQPEDLNLTDEALRLKYLGPQQMKQ) lie on the Extracellular side of the membrane. N27 and N41 each carry an N-linked (GlcNAc...) asparagine glycan. The helical transmembrane segment at 60 to 80 (FVPICVTYLLIFVVGTLGNGL) threads the bilayer. At 81 to 96 (TCTVILRNKTMRTPTN) the chain is on the cytoplasmic side. Residues 97 to 117 (FYLFSLAVSDMLVLLVGLPLE) form a helical membrane-spanning segment. Residues 118-137 (LYEMQQNYPFQLGASACYFR) lie on the Extracellular side of the membrane. A disulfide bridge connects residues C134 and C219. Residues 138–158 (ILLLETVCLASVLNVTALSVE) form a helical membrane-spanning segment. The Cytoplasmic portion of the chain corresponds to 159–181 (RYVAVVRPLQAKSVMTRAHVRRM). The chain crosses the membrane as a helical span at residues 182 to 202 (VGAIWVLATLFSLPNTSLHGL). Residues 203-235 (SQLTVPCRGPVPDSAICSLVGPMDFYKLVVLTT) are Extracellular-facing. A helical transmembrane segment spans residues 236 to 256 (ALLFFCLPMVTISVLYLLIGL). Topologically, residues 257 to 294 (RLRRERMLLQVEVKGRKTAATQETSHRRIQLQDRGRRQ) are cytoplasmic. Residues 295 to 315 (VTKMLFALVVVFGICWAPFHA) traverse the membrane as a helical segment. The Extracellular segment spans residues 316 to 339 (DRIMWSLVYGHSTEGLHLAYQCVH). Residues 340–360 (IASGIFFYLGSAANPVLYSLM) form a helical membrane-spanning segment. Over 361-428 (STRFRETFLQ…PGCQQETDPS (68 aa)) the chain is Cytoplasmic.

The protein belongs to the G-protein coupled receptor 1 family. In terms of tissue distribution, ubiquitously expressed.

It localises to the cell membrane. Functionally, receptor for the neuromedin-U and neuromedin-S neuropeptides. The polypeptide is Neuromedin-U receptor 1 (Nmur1) (Mus musculus (Mouse)).